The primary structure comprises 975 residues: Kinesin-like protein KIN-14K (975 aa).

Residues 1–40 are disordered; sequence MKNRIKKGSSMIGVYGRSDGSSSIQSSNGSESRESIDDNK. Residues 17-30 are compositionally biased toward low complexity; the sequence is RSDGSSSIQSSNGS. The span at 31–40 shows a compositional bias: basic and acidic residues; the sequence is ESRESIDDNK. The 104-residue stretch at 40 to 143 folds into the Calponin-homology (CH) domain; that stretch reads KQGHQSLVEW…SLKALKASFS (104 aa). Residues 289–345 adopt a coiled-coil conformation; it reads KERSNAELSKLKQELEIVKETHEKQFLELKLNAQKAKVELERQVKNSELRVVEAKEL. The Kinesin motor domain occupies 436–746; sequence NIRVYCRIRP…LKFAERVSGV (311 aa). Residue 520–527 coordinates ATP; sequence GQTGSGKT. Residues 757 to 788 are a coiled coil; it reads GRDVRQLMEQVSNLKDMIAKKDEELQKFQNIN. Disordered regions lie at residues 801-852 and 900-975; these read VSPP…GAKD and LFPE…NRKR. Positions 944 to 958 are enriched in low complexity; that stretch reads LSISTTSSKALTSSK.

It belongs to the TRAFAC class myosin-kinesin ATPase superfamily. Kinesin family. KIN-14 subfamily.

The sequence is that of Kinesin-like protein KIN-14K from Arabidopsis thaliana (Mouse-ear cress).